A 922-amino-acid chain; its full sequence is Eukaryotic translation initiation factor 3 subunit C (922 aa).

2 disordered regions span residues 1 to 37 and 154 to 308; these read MSRFFATGSDSESESSLSGDEILPKPVGGTFGKQPII and APIA…KVKG. Residues 8–21 are compositionally biased toward low complexity; that stretch reads GSDSESESSLSGDE. Positions 165-189 are enriched in acidic residues; sequence ESADEDQEKDEDSEASSSSDDDSDE. A compositionally biased stretch (basic and acidic residues) spans 207–216; that stretch reads SRSKFLKKEE. Over residues 217 to 243 the composition is skewed to acidic residues; that stretch reads AEDEESSSDDEDWGSDSDESDSDESDD. A compositionally biased stretch (basic and acidic residues) spans 258–275; it reads TVNEGDRQAAEKKKEEKA. A compositionally biased stretch (acidic residues) spans 289 to 301; the sequence is EGEEEEDDNEGGG. The region spanning 674 to 850 is the PCI domain; the sequence is FHMHINLELL…QTVVMHGTEP (177 aa). The segment at 885–922 is disordered; sequence YFNRGDRGDRDQKDQYQRKEGGYMRRGYRRDQQGQSNY. The span at 888 to 907 shows a compositional bias: basic and acidic residues; it reads RGDRGDRDQKDQYQRKEGGY.

This sequence belongs to the eIF-3 subunit C family. As to quaternary structure, component of the eukaryotic translation initiation factor 3 (eIF-3) complex, which is composed of 13 subunits: eif3a, eif3b, eif3c, eif3d, eif3e, eif3f, eif3g, eif3h, eif3i, eif3j, eif3k, eif3l and eif3m.

The protein localises to the cytoplasm. Component of the eukaryotic translation initiation factor 3 (eIF-3) complex, which is involved in protein synthesis of a specialized repertoire of mRNAs and, together with other initiation factors, stimulates binding of mRNA and methionyl-tRNAi to the 40S ribosome. The eIF-3 complex specifically targets and initiates translation of a subset of mRNAs involved in cell proliferation. The polypeptide is Eukaryotic translation initiation factor 3 subunit C (eif3c) (Xenopus tropicalis (Western clawed frog)).